We begin with the raw amino-acid sequence, 469 residues long: ATP synthase subunit beta (469 aa).

G156–T163 is an ATP binding site.

The protein belongs to the ATPase alpha/beta chains family. F-type ATPases have 2 components, CF(1) - the catalytic core - and CF(0) - the membrane proton channel. CF(1) has five subunits: alpha(3), beta(3), gamma(1), delta(1), epsilon(1). CF(0) has three main subunits: a(1), b(2) and c(9-12). The alpha and beta chains form an alternating ring which encloses part of the gamma chain. CF(1) is attached to CF(0) by a central stalk formed by the gamma and epsilon chains, while a peripheral stalk is formed by the delta and b chains.

The protein localises to the cell membrane. It catalyses the reaction ATP + H2O + 4 H(+)(in) = ADP + phosphate + 5 H(+)(out). In terms of biological role, produces ATP from ADP in the presence of a proton gradient across the membrane. The catalytic sites are hosted primarily by the beta subunits. This chain is ATP synthase subunit beta, found in Bacillus mycoides (strain KBAB4) (Bacillus weihenstephanensis).